A 186-amino-acid chain; its full sequence is Single-stranded DNA-binding protein 1 (186 aa).

In terms of domain architecture, SSB spans 1–108 (MDATVTVVGN…LEIDEIGPTL (108 aa)). A disordered region spans residues 119–186 (TQAGHGVSPD…EDFDSDEVPF (68 aa)). The segment covering 175–186 (SYEDFDSDEVPF) has biased composition (acidic residues).

Homotetramer.

This Tropheryma whipplei (strain Twist) (Whipple's bacillus) protein is Single-stranded DNA-binding protein 1 (ssb1).